We begin with the raw amino-acid sequence, 80 residues long: Metallothionein-like protein BIF98 (80 aa).

This sequence belongs to the metallothionein superfamily. Type 15 family.

In terms of biological role, metallothioneins have a high content of cysteine residues that bind various heavy metals. This is Metallothionein-like protein BIF98 from Brassica rapa subsp. pekinensis (Chinese cabbage).